Consider the following 405-residue polypeptide: MGGLAMEEMPLSVLFEQARKIHLAASESGVDQDVVKKGCEMFQKCEDMIGKLALFSSNETKEDISTNNLKYLLVPYYLAELTEKIIQEDRIQIVKASYAKLKEFFSFCEAMELVPDEELEASSRGGSGAPADRRALKIARFKRQKAAEAKLLEIKERKERRGRSTKASALSTPVESGEDDIPDDDSEEEREAWLSSINLAICKAIDLLEMLKREEEMLSAIKERQLKDGEGGFSRDALDDRTKKAETWHRDAAARIQYSKPAQPITCATFAQDVLEGRASVSQGHEHKNQPLIFGPASIVGGPLSTERERMIAQVFQPSHRMPTMCIEDAGLTEMNIMNDWQEQTKKAIEEATTSWYNDKPLRRKEEDEEDDDEDEEAVMKARAFDDWKDDNPRGAGNKKLTPCG.

2 disordered regions span residues 159–189 (ERRG…SEEE) and 352–405 (ATTS…TPCG). The segment covering 165-174 (TKASALSTPV) has biased composition (polar residues). 2 stretches are compositionally biased toward acidic residues: residues 176-189 (SGED…SEEE) and 367-377 (EDEEDDDEDEE). Over residues 378–393 (AVMKARAFDDWKDDNP) the composition is skewed to basic and acidic residues.

This sequence belongs to the IGBP1/TAP42 family. As to quaternary structure, interacts with the 36 kDa catalytic subunit (subunit C) of PP2A. Interacts with PP2A1 and PP2A2. Interacts with PP2A3, PPX1 and FYPP1. Interacts with FYPP3 and ABI5. Interacts with ATPK1/S6K1 and ATPK2/S6K2. Interacts with TIP41L. Post-translationally, phosphorylated by TOR kinase in vitro. Ubiquitous. Highly expressed in seed, and particularly in the embryo.

In terms of biological role, involved in the positive regulation of the TOR signaling pathway. Acts as a negative regulator of PP2A catalytic activity. Plays a positive role in the ABA-regulated inhibition of germination, probably throught its interaction with ABI5. The protein is PP2A regulatory subunit TAP46 of Arabidopsis thaliana (Mouse-ear cress).